Reading from the N-terminus, the 237-residue chain is MLRVAEPREPRVEAGGRSPWAAPPTQSKRLTSFLIQDILRDRAERHGGHSGNPQHSPDPRRDSAPEPDKAGGRGVAPEDPPSIRHSPAETPTEPESDAHFETYLLDCEHNPGDLASAPQVTKQPQKRSRAAFSHTQVIELERKFSHQKYLSAPERAHLAKNLKLTETQVKIWFQNRRYKTKRKQLSEDLGVLEKNSPLSLPALKDDSLPSTSLVSVYTSYPYYPYLYCLGSWHPSFW.

Residues 1 to 14 (MLRVAEPREPRVEA) are compositionally biased toward basic and acidic residues. Disordered regions lie at residues 1-96 (MLRV…EPES) and 108-130 (EHNP…RSRA). Residues 24-34 (PTQSKRLTSFL) are compositionally biased toward polar residues. Basic and acidic residues-rich tracts occupy residues 38 to 47 (ILRDRAERHG) and 57 to 71 (PDPR…DKAG). The segment at residues 125 to 184 (QKRSRAAFSHTQVIELERKFSHQKYLSAPERAHLAKNLKLTETQVKIWFQNRRYKTKRKQ) is a DNA-binding region (homeobox).

The protein belongs to the NK-3 homeobox family. Interacts with serum response factor (SRF). Interacts with SPDEF. Interacts with WDR77. Interacts with TOPORS which polyubiquitinates NKX3-1 and induces its proteasomal degradation. Interacts with FEM1B. In terms of processing, ubiquitinated by TOPORS; monoubiquitinated at several residues and also polyubiquitinated on single residues. In terms of tissue distribution, expressed mostly in the male urogenital tract, with highest expression in the epithelial cells lining the ducts of anterior, dorsolateral and ventral prostate and in the bulbourethral gland, and much lower in the seminal vesicle and the testis. Expression in the prostate increases during sexual maturation and is drastically reduced following castration. Expressed also in brain (hippocampus and external granular layer of the cerebral cortex), kidney (intralobular arteries), thymus and adrenal and salivary glands.

Its subcellular location is the nucleus. In terms of biological role, transcription factor, which binds preferentially the consensus sequence 5'-TAAGT[AG]-3' and can behave as a transcriptional repressor. Plays an important role in normal prostate development, regulating proliferation of glandular epithelium and in the formation of ducts in prostate. Acts as a tumor suppressor controlling prostate carcinogenesis, as shown by the ability to suppress growth and tumorigenicity of prostate carcinoma cells. Plays a role in the formation of minor salivary glands (particularly palatine and lingual glands). The polypeptide is Homeobox protein Nkx-3.1 (Mus musculus (Mouse)).